The following is a 77-amino-acid chain: Large ribosomal subunit protein bL28 (77 aa).

It belongs to the bacterial ribosomal protein bL28 family.

The polypeptide is Large ribosomal subunit protein bL28 (Polaromonas sp. (strain JS666 / ATCC BAA-500)).